The primary structure comprises 203 residues: Urease accessory protein UreG (203 aa).

Residue Gly14–Thr21 coordinates GTP.

This sequence belongs to the SIMIBI class G3E GTPase family. UreG subfamily. As to quaternary structure, homodimer. UreD, UreF and UreG form a complex that acts as a GTP-hydrolysis-dependent molecular chaperone, activating the urease apoprotein by helping to assemble the nickel containing metallocenter of UreC. The UreE protein probably delivers the nickel.

It localises to the cytoplasm. Its function is as follows. Facilitates the functional incorporation of the urease nickel metallocenter. This process requires GTP hydrolysis, probably effectuated by UreG. The sequence is that of Urease accessory protein UreG from Sinorhizobium medicae (strain WSM419) (Ensifer medicae).